A 131-amino-acid polypeptide reads, in one-letter code: Large ribosomal subunit protein bL17 (131 aa).

This sequence belongs to the bacterial ribosomal protein bL17 family. As to quaternary structure, part of the 50S ribosomal subunit. Contacts protein L32.

In Cupriavidus metallidurans (strain ATCC 43123 / DSM 2839 / NBRC 102507 / CH34) (Ralstonia metallidurans), this protein is Large ribosomal subunit protein bL17.